A 319-amino-acid polypeptide reads, in one-letter code: Major intracellular serine protease (319 aa).

Residues 1–17 constitute a propeptide that is removed on maturation; sequence MNGEIRLIPYVTNEQIM. Positions 23–307 constitute a Peptidase S8 domain; sequence PEGIKVIKAP…FLYLTAPDEL (285 aa). Active-site charge relay system residues include Asp-50, His-87, and Ser-246.

It belongs to the peptidase S8 family. As to quaternary structure, homodimer.

The protein localises to the cytoplasm. Functionally, major intracellular protease produced by Bacillus subtilis. This chain is Major intracellular serine protease (isp), found in Bacillus subtilis (strain 168).